The chain runs to 180 residues: Translation initiation factor IF-3 (180 aa).

The protein belongs to the IF-3 family. As to quaternary structure, monomer.

The protein localises to the cytoplasm. Functionally, IF-3 binds to the 30S ribosomal subunit and shifts the equilibrium between 70S ribosomes and their 50S and 30S subunits in favor of the free subunits, thus enhancing the availability of 30S subunits on which protein synthesis initiation begins. This Salmonella typhimurium (strain LT2 / SGSC1412 / ATCC 700720) protein is Translation initiation factor IF-3.